The following is a 1403-amino-acid chain: Centrosomal protein of 162 kDa (1403 aa).

The interval 19–44 (ELSDDSFENSNETPSQPNKDRKKKDT) is disordered. Polar residues predominate over residues 26-35 (ENSNETPSQP). A phosphoserine mark is found at Ser156 and Ser159. Disordered regions lie at residues 171–235 (NVEP…EKTG), 305–342 (DTGE…TTES), and 449–586 (NPSL…SDDS). Residues 176 to 189 (EGGRENESEHKELP) are compositionally biased toward basic and acidic residues. Over residues 192-204 (YSDDFEDAEDTDE) the composition is skewed to acidic residues. Positions 206–220 (LITKDEETRPKENPE) are enriched in basic and acidic residues. Over residues 449 to 466 (NPSLLPQDNKANQTSRSR) the composition is skewed to polar residues. The residue at position 468 (Ser468) is a Phosphoserine. Residues 481–496 (PCKKARSAPPLPRRKP) show a composition bias toward basic residues. A compositionally biased stretch (polar residues) spans 504–517 (ARSSGYSKPSSPLQ). Composition is skewed to basic and acidic residues over residues 522–532 (LEKKTSKDNTK) and 567–581 (PHRE…RPED). 3 coiled-coil regions span residues 610 to 1120 (KRAQ…MLSR), 1170 to 1205 (EVLE…QLES), and 1234 to 1385 (CQNA…LHRQ).

It belongs to the CEP162 family. Interacts with alpha-tubulin. Interacts with CPNE4. Interacts with CEP290.

The protein resides in the cytoplasm. Its subcellular location is the cytoskeleton. It localises to the microtubule organizing center. It is found in the centrosome. The protein localises to the centriole. The protein resides in the spindle. Its subcellular location is the nucleus. Required to promote assembly of the transition zone in primary cilia. Acts by specifically recognizing and binding the axonemal microtubule. Localizes to the distal ends of centrioles before ciliogenesis and directly binds to axonemal microtubule, thereby promoting and restricting transition zone formation specifically at the cilia base. Required to mediate CEP290 association with microtubules. The chain is Centrosomal protein of 162 kDa (Cep162) from Rattus norvegicus (Rat).